The following is a 71-amino-acid chain: Protein SlyX homolog (71 aa).

It belongs to the SlyX family.

This is Protein SlyX homolog from Azotobacter vinelandii (strain DJ / ATCC BAA-1303).